A 368-amino-acid polypeptide reads, in one-letter code: Chorismate synthase (368 aa).

The NADP(+) site is built by R48 and R54. FMN-binding positions include 131 to 133 (RSS), 243 to 244 (NA), G292, 307 to 311 (KPTSS), and R333.

Belongs to the chorismate synthase family. Homotetramer. FMNH2 serves as cofactor.

The catalysed reaction is 5-O-(1-carboxyvinyl)-3-phosphoshikimate = chorismate + phosphate. Its pathway is metabolic intermediate biosynthesis; chorismate biosynthesis; chorismate from D-erythrose 4-phosphate and phosphoenolpyruvate: step 7/7. Its function is as follows. Catalyzes the anti-1,4-elimination of the C-3 phosphate and the C-6 proR hydrogen from 5-enolpyruvylshikimate-3-phosphate (EPSP) to yield chorismate, which is the branch point compound that serves as the starting substrate for the three terminal pathways of aromatic amino acid biosynthesis. This reaction introduces a second double bond into the aromatic ring system. This chain is Chorismate synthase, found in Nitrobacter winogradskyi (strain ATCC 25391 / DSM 10237 / CIP 104748 / NCIMB 11846 / Nb-255).